Reading from the N-terminus, the 630-residue chain is tRNA uridine 5-carboxymethylaminomethyl modification enzyme MnmG (630 aa).

13 to 18 (GGGHAG) serves as a coordination point for FAD. Position 273-287 (273-287 (GPRYCPSIEDKIHRF)) interacts with NAD(+).

It belongs to the MnmG family. Homodimer. Heterotetramer of two MnmE and two MnmG subunits. FAD is required as a cofactor.

It is found in the cytoplasm. In terms of biological role, NAD-binding protein involved in the addition of a carboxymethylaminomethyl (cmnm) group at the wobble position (U34) of certain tRNAs, forming tRNA-cmnm(5)s(2)U34. This chain is tRNA uridine 5-carboxymethylaminomethyl modification enzyme MnmG, found in Pseudomonas aeruginosa (strain ATCC 15692 / DSM 22644 / CIP 104116 / JCM 14847 / LMG 12228 / 1C / PRS 101 / PAO1).